The primary structure comprises 1020 residues: Nucleotide-binding oligomerization domain-containing protein 2 (1020 aa).

2 consecutive CARD domains span residues 6-104 (CDMC…GSWD) and 106-200 (HSLH…AECQ). The short motif at 43-57 (WDVLSREDYEGLSLP) is the ATG16L1-binding motif element. Residues T219, Y232, T233, G282, S283, G284, K285, S286, and T287 each contribute to the ADP site. The interval 221 to 254 (DGSENLCLEDIYTENILELQTEVGTAGALQKSPA) is required for CARD9 binding. Residues 273–600 (DTILVVGEAG…AAFYLAVSAD (328 aa)) enclose the NACHT domain. C375 carries S-palmitoyl cysteine lipidation. H583 is an ADP binding site. 10 LRR repeats span residues 685–709 (ARARSCLAHSLREHFHSIPPAVPGE), 726–749 (LYEMQEEQLAQEAVRRLDIGHLKL), 766–792 (LQHLQRPVALQLDYNSVGDVGVEQLRP), 794–817 (LGVCTALYLRDNNISDRGARTLVE), 822–845 (CEQLQKLALFNNKLTDACACSMAK), 850–873 (KQNFLSLRVGNNHITAAGAEVLAQ), 906–929 (HQNLKWLSLVGNNIGSMGAEALAL), 934–962 (NKSLEELCLEENHICDEGVYSLAEGLKRN), 963–985 (STLKFLKLSNNGITYRGAEALLQ), and 1005–1019 (LEEIQTLSSRDARLL).

It belongs to the NOD1-NOD2 family. As to quaternary structure, homooligomer: homooligomerizes following muramyl dipeptide (MDP)-binding, promoting RIPK2 recruitment. Interacts (via CARD domain) with RIPK2 (via CARD domain). Following RIPK2 recruitment, RIPK2 homooligomerizes via its CARD domain and forms long filaments named RIPosomes. Interacts (via CARD domain) with ubiquitin; inhibiting interaction with RIPK2. Component of a signaling complex consisting of ARHGEF2, NOD2 and RIPK2. Interacts with ANKRD17 (via N-terminus). Interacts with HSPA1A; the interaction enhances NOD2 stability. Interacts (via both CARD domains) with HSP90; the interaction enhances NOD2 stability. Interacts (via CARD domain) with SOCS3; the interaction promotes NOD2 degradation. Interacts (via CARD domain) with ERBIN; the interaction inhibits activation of NOD2. Interacts with MAPKBP1; the interaction is enhanced in the presence of muramyl dipeptide (MDP) and inhibits NOD2 homooligomerization and activation. Interacts with INAVA; the interaction takes place upon Pattern recognition receptor (PRR) stimulation. Interacts (via NACHT domain) with CARD9. Interacts (via CARD domain) with CASP1; this interaction leads to IL1B processing. Also interacts with CASP4. Interacts with NLRP1; this interaction is enhanced in the presence of muramyl dipeptide (MDP) and leads to increased IL1B release. Interacts with NLRP12; this interaction promotes degradation of NOD2 through the ubiquitin-proteasome pathway. Interacts with ANKHD1, C10orf67, CHMP5, DOCK7, ENTR1, KRT15, LDOC1, PPP1R12C, PPP2R3B, TRIM41 and VIM. Interacts with MAVS; interaction takes place following single-stranded RNA (ssRNA)-binding. Interacts with ATG16L1. Interacts with Irgm1; promoting Irgm1 'Lys-63'-linked polyubiquitination, which is required for interactions with the core autophagy factors. In terms of processing, palmitoylated by ZDHHC5; palmitoylation is required for proper recruitment to the bacterial entry site and hence for proper signaling upon cognate peptidoglycan detection. Palmitoylation promotes localization to the cell membrane. Palmitoylation protects from SQSTM1/p62-dependent autophagic degradation. Polyubiquitinated by TRIM27, leading to proteasome-mediated degradation. Polyubiquitinated and degraded following muramyl dipeptide (MDP) stimulation, conferring MDP tolerance and preventing septic shock. Post-translationally, degraded via selective autophagy following interaction with Irgm1. Irgm1 promotes NOD2-RIPK2 RIPosome recruitment to autophagosome membranes, promoting their SQSTM1/p62-dependent autophagic degradation. In terms of processing, O-glycosylated by OGT, O-GlcNAcylation increases protein stability. In terms of tissue distribution, expressed in monocytes, macrophages, dendritic cells, hepatocytes, preadipocytes, epithelial cells of oral cavity, lung and intestine. In intestine, highly expressed in ileal Paneth cells of the crypt and in intestinal stem cells. Also expressed in neurons of several brain regions including the hypothalamus.

The protein localises to the cell membrane. It is found in the basolateral cell membrane. Its subcellular location is the cytoplasm. The protein resides in the mitochondrion. Its activity is regulated as follows. ADP-binding promotes an inactive closed conformation. In terms of biological role, pattern recognition receptor (PRR) that detects bacterial peptidoglycan fragments and other danger signals and plays an important role in gastrointestinal immunity. Specifically activated by muramyl dipeptide (MDP), a fragment of bacterial peptidoglycan found in every bacterial peptidoglycan type. NOD2 specifically recognizes and binds 6-O-phospho-MDP, the phosphorylated form of MDP, which is generated by NAGK. 6-O-phospho-MDP-binding triggers oligomerization that facilitates the binding and subsequent activation of the proximal adapter receptor-interacting RIPK2. Following recruitment, RIPK2 undergoes 'Met-1'- (linear) and 'Lys-63'-linked polyubiquitination by E3 ubiquitin-protein ligases XIAP, BIRC2, BIRC3 and the LUBAC complex, becoming a scaffolding protein for downstream effectors, triggering activation of the NF-kappa-B and MAP kinases signaling. This in turn leads to the transcriptional activation of hundreds of genes involved in immune response. Its ability to detect bacterial MDP plays a central role in maintaining the equilibrium between intestinal microbiota and host immune responses to control inflammation. An imbalance in this relationship results in dysbiosis, whereby pathogenic bacteria prevail on commensals, causing damage in the intestinal epithelial barrier as well as allowing bacterial invasion and inflammation. Acts as a regulator of appetite by sensing MDP in a subset of brain neurons: microbiota-derived MDP reach the brain, where they bind and activate NOD2 in inhibitory hypothalamic neurons, decreasing neuronal activity, thereby regulating satiety and body temperature. NOD2-dependent MDP-sensing of bacterial cell walls in the intestinal epithelial compartment contributes to sustained postnatal growth upon undernutrition. Also plays a role in antiviral response by acting as a sensor of single-stranded RNA (ssRNA) from viruses: upon ssRNA-binding, interacts with MAVS, leading to activation of interferon regulatory factor-3/IRF3 and expression of type I interferon. Also acts as a regulator of autophagy in dendritic cells via its interaction with ATG16L1, possibly by recruiting ATG16L1 at the site of bacterial entry. NOD2 activation in the small intestine crypt also contributes to intestinal stem cells survival and function: acts by promoting mitophagy via its association with ATG16L1. In addition to its main role in innate immunity, also regulates the adaptive immune system by acting as regulator of helper T-cell and regulatory T-cells (Tregs). Besides recognizing pathogens, also involved in the endoplasmic reticulum stress response: acts by sensing and binding to the cytosolic metabolite sphingosine-1-phosphate generated in response to endoplasmic reticulum stress, initiating an inflammation process that leads to activation of the NF-kappa-B and MAP kinases signaling. May also be involved in NLRP1 activation following activation by MDP, leading to CASP1 activation and IL1B release in macrophages. In Mus musculus (Mouse), this protein is Nucleotide-binding oligomerization domain-containing protein 2.